Consider the following 337-residue polypeptide: Transcription initiation factor IIB (337 aa).

The TFIIB-type zinc-finger motif lies at 36-68; it reads SVQSVCPECGSRQLVHDYERAELVCQNCGLVLD. Residues C41, C44, C60, and C63 each coordinate Zn(2+). Repeat copies occupy residues 154–237 and 248–329.

This sequence belongs to the TFIIB family.

Stabilizes TBP binding to an archaeal box-A promoter. Also responsible for recruiting RNA polymerase II to the pre-initiation complex (DNA-TBP-TFIIB). In Methanoculleus marisnigri (strain ATCC 35101 / DSM 1498 / JR1), this protein is Transcription initiation factor IIB.